We begin with the raw amino-acid sequence, 337 residues long: Ornithine carbamoyltransferase (337 aa).

Carbamoyl phosphate-binding positions include 57–60, glutamine 84, arginine 108, and 135–138; these read STRT and HPTQ. L-ornithine-binding positions include asparagine 167, aspartate 231, and 235 to 236; that span reads SM. Residues 272-273 and arginine 317 contribute to the carbamoyl phosphate site; that span reads CL.

Belongs to the aspartate/ornithine carbamoyltransferase superfamily. OTCase family.

The protein localises to the cytoplasm. It catalyses the reaction carbamoyl phosphate + L-ornithine = L-citrulline + phosphate + H(+). It participates in amino-acid degradation; L-arginine degradation via ADI pathway; carbamoyl phosphate from L-arginine: step 2/2. Functionally, reversibly catalyzes the transfer of the carbamoyl group from carbamoyl phosphate (CP) to the N(epsilon) atom of ornithine (ORN) to produce L-citrulline. The sequence is that of Ornithine carbamoyltransferase from Streptococcus uberis (strain ATCC BAA-854 / 0140J).